We begin with the raw amino-acid sequence, 626 residues long: MNVAASQQPTPATVASRGRSAAPERMTGAKAIVRSLEELNADIVFGIPGGAVLPVYDPLYSSTKVRHVLVRHEQGAGHAATGYAQVTGRVGVCIATSGPGATNLVTPIADANLDSVPMVAITGQVGSGLLGTDAFQEADIRGITMPVTKHNFMVTNPNDIPQALAEAFHLAITGRPGPVLVDIPKDVQNAELDFVWPPKIDLPGYRPVSTPHARQIEQAVKLIGEAKKPVLYVGGGVIKADAHEELRAFAEYTGIPVVTTLMALGTFPESHELHMGMPGMHGTVSAVGALQRSDLLIAIGSRFDDRVTGDVDTFAPDAKIIHADIDPAEIGKIKQVEVPIVGDAREVLARLLETTKASKAETEDISEWVDYLKGLKARFPRGYDEQPGDLLAPQFVIETLSKEVGPDAIYCAGVGQHQMWAAQFVDFEKPRTWLNSGGLGTMGYAVPAALGAKAGAPDKEVWAIDGDGCFQMTNQELTTAAVEGFPIKIALINNGNLGMVRQWQTLFYEGRYSNTKLRNQGEYMPDFVTLSEGLGCVAIRVTKAEEVLPAIQKAREINDRPVVIDFIVGEDAQVWPMVSAGSSNSDIQYALGLRPFFDGDESAAEDPADIHEAVSDIDAAVESTEA.

Residues M1–T13 show a composition bias toward polar residues. The tract at residues M1–P23 is disordered. A thiamine diphosphate-binding site is contributed by E73. Residues R175, H281–R302, and D324–D343 contribute to the FAD site. The thiamine pyrophosphate binding stretch occupies residues Q416–N496. D467 and N494 together coordinate Mg(2+).

This sequence belongs to the TPP enzyme family. As to quaternary structure, dimer of large and small chains. Mg(2+) is required as a cofactor. It depends on thiamine diphosphate as a cofactor.

The catalysed reaction is 2 pyruvate + H(+) = (2S)-2-acetolactate + CO2. Its pathway is amino-acid biosynthesis; L-isoleucine biosynthesis; L-isoleucine from 2-oxobutanoate: step 1/4. The protein operates within amino-acid biosynthesis; L-valine biosynthesis; L-valine from pyruvate: step 1/4. This Corynebacterium glutamicum (strain ATCC 13032 / DSM 20300 / JCM 1318 / BCRC 11384 / CCUG 27702 / LMG 3730 / NBRC 12168 / NCIMB 10025 / NRRL B-2784 / 534) protein is Acetolactate synthase large subunit (ilvB).